Reading from the N-terminus, the 364-residue chain is Sorbitol dehydrogenase (364 aa).

Cys-54 serves as a coordination point for Zn(2+). Tyr-60 is a binding site for substrate. Residues His-79 and Glu-80 each contribute to the Zn(2+) site. Glu-165 is a substrate binding site. Residues Ile-193, Asp-213, Arg-218, 284 to 286, and 308 to 310 each bind NAD(+); these read VGM and VFR. Residues Arg-310 and Tyr-311 each coordinate substrate.

It belongs to the zinc-containing alcohol dehydrogenase family. As to quaternary structure, homotetramer. Zn(2+) is required as a cofactor. In terms of tissue distribution, mostly expressed in dry seeds and leaves, and, to a lower extent, in roots, stems, flowers and siliques (at protein level).

It localises to the mitochondrion membrane. The protein resides in the cell membrane. The protein localises to the cytoplasm. It is found in the cytosol. The enzyme catalyses keto-D-fructose + NADH + H(+) = D-sorbitol + NAD(+). It carries out the reaction ribitol + NAD(+) = D-ribulose + NADH + H(+). It catalyses the reaction xylitol + NAD(+) = D-xylulose + NADH + H(+). In terms of biological role, polyol dehydrogenase that catalyzes the NAD(+)-dependent oxidation of various sugar alcohols. Is mostly active with D-sorbitol (D-glucitol), ribitol and xylitol as substrates, leading to the C2-oxidized products D-fructose, D-ribulose and D-xylulose, respectively. To a lesser extent, can also oxidize arabitol, mannitol, lactitol and maltitol in vitro. Is required for sorbitol metabolism. Cannot use NADP(+) as the electron acceptor. The sequence is that of Sorbitol dehydrogenase (SDH) from Arabidopsis thaliana (Mouse-ear cress).